The following is a 294-amino-acid chain: S-adenosylmethionine uptake transporter (294 aa).

Transmembrane regions (helical) follow at residues 8–28 (YLTGIGWFLLSLVSSSANDVI), 41–61 (VAFFRFFFSSIVLLPFVVYYG), 74–91 (ILRGLLLFFGMTSWTYGL), 98–118 (TATVVSFSIPLFTLILAVFFL), 121–141 (NIIWPRWVVTVVGFIGLVVTL), 148–168 (FNPEILYFVLAAISFAMLDII), 177–197 (SMISMLFYSAIVTAIVSLPVA), 207–227 (FELALLFVLGSSGSLILFFLL), 237–257 (ATAPYRYLELVISVIAAYFIF), and 260–280 (FPDKSTLHGAVIIIPTTLFII). EamA domains follow at residues 21–141 (SSSA…VVTL) and 160–280 (ISFA…LFII).

Belongs to the drug/metabolite transporter (DMT) superfamily. 10 TMS drug/metabolite exporter (DME) (TC 2.A.7.3) family.

The protein resides in the cell inner membrane. Its function is as follows. Transports S-adenosylmethionine. In Rickettsia conorii (strain ATCC VR-613 / Malish 7), this protein is S-adenosylmethionine uptake transporter (sam).